The primary structure comprises 359 residues: MEEITQHFGVGASSHGHGHGQHHHHHHHHHPWASSLSAVVAPLPPQPPSAGLPLTLNTVAATGNSGGSGNPVLQLANGGGLLDACVKAKEPSSSSPYAGDVEAIKAKIISHPHYYSLLTAYLECNKVGAPPEVSARLTEIAQEVEARQRTALGGLAAATEPELDQFMEAYHEMLVKFREELTRPLQEAMEFMRRVESQLNSLSISGRSLRNILSSGSSEEDQEGSGGETELPEVDAHGVDQELKHHLLKKYSGYLSSLKQELSKKKKKGKLPKEARQQLLSWWDQHYKWPYPSETQKVALAESTGLDLKQINNWFINQRKRHWKPSEEMHHLMMDGYHTTNAFYMDGHFINDGGLYRLG.

Disordered stretches follow at residues 1–34 (MEEI…PWAS) and 213–232 (LSSG…TELP). Basic residues predominate over residues 16-31 (GHGHGQHHHHHHHHHP). One can recognise an ELK domain in the interval 242 to 262 (ELKHHLLKKYSGYLSSLKQEL). A DNA-binding region (homeobox; TALE-type) is located at residues 263-326 (SKKKKKGKLP…NQRKRHWKPS (64 aa)).

Belongs to the TALE/KNOX homeobox family. In terms of assembly, forms homodimers. Binds to MBP2C; this interaction reduces RNA binding capacity. As to expression, expressed in apical meristems of vegetative and floral stems as well as in the underlying ground meristem. Specifically expressed in vascular bundles developing both in the leaf and stem. Very low levels of expression in leaves.

It localises to the nucleus. It is found in the cell junction. The protein resides in the plasmodesma. Its subcellular location is the cytoplasm. Its function is as follows. Binds to RNA. Possible transcription factor that regulates genes involved in development. Mutations in KN-1 alter leaf development. Foci of cells along the lateral vein do not differentiate properly but continue to divide, forming knots. May participate in the switch from indeterminate to determinate cell fates. Probably binds to the DNA sequence 5'-TGAC-3'. This chain is Homeotic protein knotted-1 (KN-1), found in Zea mays (Maize).